The chain runs to 177 residues: Large ribosomal subunit protein uL6 (177 aa).

This sequence belongs to the universal ribosomal protein uL6 family. As to quaternary structure, part of the 50S ribosomal subunit.

In terms of biological role, this protein binds to the 23S rRNA, and is important in its secondary structure. It is located near the subunit interface in the base of the L7/L12 stalk, and near the tRNA binding site of the peptidyltransferase center. This is Large ribosomal subunit protein uL6 from Rhizobium etli (strain CIAT 652).